A 183-amino-acid polypeptide reads, in one-letter code: uncharacterized protein (183 aa).

Positions 1-182 constitute a Macro domain; it reads MFRVVHGDIT…VALKVLERDE (182 aa).

This is an uncharacterized protein from Pyrococcus abyssi (strain GE5 / Orsay).